Consider the following 230-residue polypeptide: RNA-binding protein 24 (230 aa).

Residues 11–88 (TKIFVGGLPY…RKANVNLAYL (78 aa)) form the RRM domain.

It is found in the nucleus. Its subcellular location is the cytoplasm. Its function is as follows. Multifunctional RNA-binding protein involved in the regulation of pre-mRNA splicing, mRNA stability and mRNA translation important for cell fate decision and differentiation. Plays a major role in pre-mRNA alternative splicing regulation. Mediates preferentially muscle-specific exon inclusion in numerous mRNAs important for striated cardiac and skeletal muscle cell differentiation. Binds to intronic splicing enhancer (ISE) composed of stretches of GU-rich motifs localized in flanking intron of exon that will be included by alternative splicing. Involved in embryonic stem cell (ESC) transition to cardiac cell differentiation by promoting pre-mRNA alternative splicing events of several pluripotency and/or differentiation genes. Plays a role in the regulation of mRNA stability and mRNA translation to which it is bound. Involved in myogenic differentiation by regulating myog levels. Binds to a huge amount of mRNAs. Required for embryonic heart development, sarcomer and M-band formation in striated muscles. In Danio rerio (Zebrafish), this protein is RNA-binding protein 24 (rbm24).